Reading from the N-terminus, the 201-residue chain is FMN-dependent NADH:quinone oxidoreductase (201 aa).

FMN-binding positions include S10, 16-18 (SQS), 96-99 (MYNF), and 140-143 (SRGG).

This sequence belongs to the azoreductase type 1 family. As to quaternary structure, homodimer. FMN serves as cofactor.

It catalyses the reaction 2 a quinone + NADH + H(+) = 2 a 1,4-benzosemiquinone + NAD(+). The catalysed reaction is N,N-dimethyl-1,4-phenylenediamine + anthranilate + 2 NAD(+) = 2-(4-dimethylaminophenyl)diazenylbenzoate + 2 NADH + 2 H(+). Its function is as follows. Quinone reductase that provides resistance to thiol-specific stress caused by electrophilic quinones. Also exhibits azoreductase activity. Catalyzes the reductive cleavage of the azo bond in aromatic azo compounds to the corresponding amines. The protein is FMN-dependent NADH:quinone oxidoreductase of Salmonella paratyphi A (strain ATCC 9150 / SARB42).